A 193-amino-acid polypeptide reads, in one-letter code: NADH-quinone oxidoreductase subunit B (193 aa).

Residues Cys-72, Cys-73, Cys-137, and Cys-167 each contribute to the [4Fe-4S] cluster site.

The protein belongs to the complex I 20 kDa subunit family. In terms of assembly, NDH-1 is composed of 14 different subunits. Subunits NuoB, C, D, E, F, and G constitute the peripheral sector of the complex. It depends on [4Fe-4S] cluster as a cofactor.

It is found in the cell inner membrane. It catalyses the reaction a quinone + NADH + 5 H(+)(in) = a quinol + NAD(+) + 4 H(+)(out). In terms of biological role, NDH-1 shuttles electrons from NADH, via FMN and iron-sulfur (Fe-S) centers, to quinones in the respiratory chain. The immediate electron acceptor for the enzyme in this species is believed to be ubiquinone. Couples the redox reaction to proton translocation (for every two electrons transferred, four hydrogen ions are translocated across the cytoplasmic membrane), and thus conserves the redox energy in a proton gradient. This Rhizobium rhizogenes (strain K84 / ATCC BAA-868) (Agrobacterium radiobacter) protein is NADH-quinone oxidoreductase subunit B.